Consider the following 455-residue polypeptide: tRNA modification GTPase MnmE (455 aa).

The (6S)-5-formyl-5,6,7,8-tetrahydrofolate site is built by arginine 24, glutamate 86, and arginine 125. Residues 220–376 (GLTVAIIGRP…LETAILETVQ (157 aa)) enclose the TrmE-type G domain. Asparagine 230 serves as a coordination point for K(+). Residues 230 to 235 (NVGKSS), 249 to 255 (TDLPGTT), and 274 to 277 (DTAG) contribute to the GTP site. Position 234 (serine 234) interacts with Mg(2+). Residues threonine 249, leucine 251, and threonine 254 each coordinate K(+). Threonine 255 contributes to the Mg(2+) binding site. Residue lysine 455 participates in (6S)-5-formyl-5,6,7,8-tetrahydrofolate binding.

This sequence belongs to the TRAFAC class TrmE-Era-EngA-EngB-Septin-like GTPase superfamily. TrmE GTPase family. As to quaternary structure, homodimer. Heterotetramer of two MnmE and two MnmG subunits. K(+) serves as cofactor.

Its subcellular location is the cytoplasm. In terms of biological role, exhibits a very high intrinsic GTPase hydrolysis rate. Involved in the addition of a carboxymethylaminomethyl (cmnm) group at the wobble position (U34) of certain tRNAs, forming tRNA-cmnm(5)s(2)U34. This Acaryochloris marina (strain MBIC 11017) protein is tRNA modification GTPase MnmE.